We begin with the raw amino-acid sequence, 162 residues long: uncharacterized protein (162 aa).

The N-terminal stretch at 1 to 34 (MRKKNNIKKWLLIIAGFLIICIITLFVMVSGNKV) is a signal peptide.

This is an uncharacterized protein from Bacillus subtilis (strain 168).